We begin with the raw amino-acid sequence, 515 residues long: Meiotically up-regulated gene 68 protein (515 aa).

Residues 165–204 (LHSIESERNESSLSLDSGESEKKSEEDNGNGEQNYIPEQY) form a disordered region.

Has a role in meiosis. The sequence is that of Meiotically up-regulated gene 68 protein (mug68) from Schizosaccharomyces pombe (strain 972 / ATCC 24843) (Fission yeast).